We begin with the raw amino-acid sequence, 708 residues long: Lactotransferrin (708 aa).

The N-terminal stretch at 1 to 19 (MKLFFPALLSLGALGLCLA) is a signal peptide. Transferrin-like domains lie at 25–352 (VRWC…GLRE) and 364–693 (VVWC…KLRR). 2 cysteine pairs are disulfide-bonded: Cys28/Cys64 and Cys38/Cys55. The interval 44–51 (RMKKVRGP) is interaction with E.coli ompC. Position 79 (Asp79) interacts with Fe(3+). The active site involves Lys92. Tyr111 serves as a coordination point for Fe(3+). Disulfide bonds link Cys134-Cys217, Cys176-Cys192, Cys179-Cys202, Cys189-Cys200, and Cys250-Cys264. Thr136, Arg140, Ala142, and Gly143 together coordinate hydrogencarbonate. Tyr211 is a binding site for Fe(3+). N-linked (GlcNAc...) asparagine glycosylation is present at Asn252. His272 is a Fe(3+) binding site. Ser278 acts as the Nucleophile in catalysis. 2 disulfide bridges follow: Cys367–Cys399 and Cys377–Cys390. Asn385 carries an N-linked (GlcNAc...) asparagine glycan. Fe(3+) contacts are provided by Asp414 and Tyr452. Intrachain disulfides connect Cys424-Cys703, Cys444-Cys666, Cys476-Cys551, Cys500-Cys694, Cys510-Cys524, Cys521-Cys534, Cys592-Cys606, and Cys644-Cys649. Residues Thr478, Arg482, Ala484, and Gly485 each contribute to the hydrogencarbonate site. N-linked (GlcNAc...) asparagine glycosylation is present at Asn537. Tyr545 lines the Fe(3+) pocket. Asn594 is a glycosylation site (N-linked (GlcNAc...) asparagine). His614 serves as a coordination point for Fe(3+).

This sequence belongs to the transferrin family. As to quaternary structure, monomer. Found in a complex with LTF, CLU, EPPIN and SEMG1. Interacts with E.coli outer membrane protein C (OmpC). Found in a complex with MPO and LTF; interacts directly with CP, allows Fe(3+) incorporation into LTF and activation of CP ferroxidase activity. Poly-N-acetyllactosaminic carbohydrate moiety seems to be needed for TLR4 activation.

The protein localises to the secreted. It is found in the cytoplasmic granule. Its function is as follows. Transferrins are iron binding transport proteins which can bind two Fe(3+) ions in association with the binding of an anion, usually bicarbonate. Major iron-binding and multifunctional protein found in exocrine fluids such as breast milk and mucosal secretions. Has antimicrobial activity, which depends on the extracellular cation concentration. Antimicrobial properties include bacteriostasis, which is related to its ability to sequester free iron and thus inhibit microbial growth, as well as direct bactericidal properties leading to the release of lipopolysaccharides from the bacterial outer membrane. Can also prevent bacterial biofilm development in P.aeruginosa infection. Has weak antifungal activity against C.albicans. Has anabolic, differentiating and anti-apoptotic effects on osteoblasts and can also inhibit osteoclastogenesis, possibly playing a role in the regulation of bone growth. Promotes binding of species C adenoviruses to epithelial cells, promoting adenovirus infection. Can inhibit papillomavirus infections. Stimulates the TLR4 signaling pathway leading to NF-kappa-B activation and subsequent pro-inflammatory cytokine production while also interfering with the lipopolysaccharide (LPS)-stimulated TLR4 signaling. Inhibits neutrophil granulocyte migration to sites of apoptosis, when secreted by apoptotic cells. Stimulates VEGFA-mediated endothelial cell migration and proliferation. Binds heparin, chondroitin sulfate and possibly other glycosaminoglycans (GAGs). Also binds specifically to pneumococcal surface protein A (PspA), the lipid A portion of bacterial lipopolysaccharide (LPS), lysozyme and DNA. In terms of biological role, lactoferricin binds to the bacterial surface and is crucial for the bactericidal functions. Has some antiviral activity against papillomavirus infection. N-terminal region shows strong antifungal activity against C.albicans. Contains two BBXB heparin-binding consensus sequences that appear to form the predominate functional GAG-binding site. Functionally, the lactotransferrin transferrin-like domain 1 functions as a serine protease of the peptidase S60 family that cuts arginine rich regions. This function contributes to the antimicrobial activity. Shows a preferential cleavage at -Arg-Ser-Arg-Arg-|- and -Arg-Arg-Ser-Arg-|-, and of Z-Phe-Arg-|-aminomethylcoumarin sites. The polypeptide is Lactotransferrin (LTF) (Camelus dromedarius (Dromedary)).